A 331-amino-acid polypeptide reads, in one-letter code: Putative T-box protein 36 (331 aa).

A DNA-binding region (T-box) is located at residues 29–210 (EITKKQWNQL…MNRFSRKRKY (182 aa)).

The protein localises to the nucleus. The chain is Putative T-box protein 36 (tbx-36) from Caenorhabditis elegans.